The primary structure comprises 1436 residues: DNA-directed RNA polymerase subunit beta (1436 aa).

It belongs to the RNA polymerase beta chain family. As to quaternary structure, the RNAP catalytic core consists of 2 alpha, 1 beta, 1 beta' and 1 omega subunit. When a sigma factor is associated with the core the holoenzyme is formed, which can initiate transcription.

The catalysed reaction is RNA(n) + a ribonucleoside 5'-triphosphate = RNA(n+1) + diphosphate. DNA-dependent RNA polymerase catalyzes the transcription of DNA into RNA using the four ribonucleoside triphosphates as substrates. This Wolbachia pipientis protein is DNA-directed RNA polymerase subunit beta.